A 194-amino-acid chain; its full sequence is Probable nicotinate-nucleotide adenylyltransferase (194 aa).

This sequence belongs to the NadD family.

The catalysed reaction is nicotinate beta-D-ribonucleotide + ATP + H(+) = deamido-NAD(+) + diphosphate. The protein operates within cofactor biosynthesis; NAD(+) biosynthesis; deamido-NAD(+) from nicotinate D-ribonucleotide: step 1/1. Functionally, catalyzes the reversible adenylation of nicotinate mononucleotide (NaMN) to nicotinic acid adenine dinucleotide (NaAD). This Brucella abortus (strain 2308) protein is Probable nicotinate-nucleotide adenylyltransferase.